A 209-amino-acid chain; its full sequence is rRNA N(6)-adenosine-methyltransferase METTL5 (209 aa).

S-adenosyl-L-methionine is bound by residues Q28, T31, G59, C62, V64, D81, and 108 to 109; that span reads DV.

It belongs to the methyltransferase superfamily. PrmA family. In terms of assembly, heterodimer; heterodimerizes with TRMT112. In terms of tissue distribution, expressed from very early development (8 post-conceptual weeks) and expression persists through adulthood in multiple substructures of the brain, including the cerebellar cortex, hippocampus, and striatum.

Its subcellular location is the nucleus. The protein localises to the presynapse. It localises to the postsynapse. The catalysed reaction is adenosine(1832) in 18S rRNA + S-adenosyl-L-methionine = N(6)-methyladenosine(1832) in 18S rRNA + S-adenosyl-L-homocysteine + H(+). With respect to regulation, rRNA N6-adenosine-methyltransferase activity is inhibited by zinc. In terms of biological role, catalytic subunit of a heterodimer with TRMT112, which specifically methylates the 6th position of adenine in position 1832 of 18S rRNA. N6-methylation of adenine(1832) in 18S rRNA resides in the decoding center of 18S rRNA and is required for translation and embryonic stem cells (ESCs) pluripotency and differentiation. The sequence is that of rRNA N(6)-adenosine-methyltransferase METTL5 from Homo sapiens (Human).